The following is a 285-amino-acid chain: Probable E3 ubiquitin-protein ligase IE1 (285 aa).

The Cytoplasmic segment spans residues 1 to 201; it reads MASKDSDVRC…LPGYWDRDDR (201 aa). The segment at 124-183 adopts an RING-CH-type zinc-finger fold; sequence SIDEEGKQCWICRDGESLPEARYCNCYGDLQYCHEECLKTWISMSGEKKCKFCQTPYKVN. Zn(2+)-binding residues include Cys132, Cys135, Cys147, Cys149, His157, Cys160, Cys173, and Cys176. The chain crosses the membrane as a helical span at residues 202-222; sequence FVFIAGFIGMGTILAGWIASF. Residues 223 to 238 are Extracellular-facing; it reads FYLLVVLCGKYFTYKD. A helical membrane pass occupies residues 239–259; that stretch reads VMIVVGGLAIIQVVGLMFSLF. The Cytoplasmic portion of the chain corresponds to 260 to 285; that stretch reads MYFQIGNLLRQYINYMTETNIDPLRT.

It is found in the membrane. The catalysed reaction is S-ubiquitinyl-[E2 ubiquitin-conjugating enzyme]-L-cysteine + [acceptor protein]-L-lysine = [E2 ubiquitin-conjugating enzyme]-L-cysteine + N(6)-ubiquitinyl-[acceptor protein]-L-lysine.. It participates in protein modification; protein ubiquitination. Controls the expression of later classes of genes and also of the IE genes (Potential). E3 ubiquitin-protein ligase. E3 ubiquitin ligases accept ubiquitin from an E2 ubiquitin-conjugating enzyme in the form of a thioester and then directly transfer the ubiquitin to targeted substrates. The polypeptide is Probable E3 ubiquitin-protein ligase IE1 (IE1) (Bovine herpesvirus 4 (strain DN-599) (BoHV-4)).